The following is a 74-amino-acid chain: Conotoxin AbVIH (74 aa).

An N-terminal signal peptide occupies residues 1-17; the sequence is VLIIAVLFLTACQLTTA. A propeptide spanning residues 18–40 is cleaved from the precursor; that stretch reads ETSSRGKQKHRALRSTDKDSRMT. The tract at residues 19-40 is disordered; sequence TSSRGKQKHRALRSTDKDSRMT. 3 disulfide bridges follow: Cys-43-Cys-57, Cys-50-Cys-61, and Cys-56-Cys-68.

Belongs to the conotoxin O1 superfamily. As to expression, expressed by the venom duct.

The protein resides in the secreted. This is Conotoxin AbVIH from Conus abbreviatus (Abbreviated cone).